We begin with the raw amino-acid sequence, 368 residues long: Trans-enoyl reductase TwmE (368 aa).

Position 49-52 (49-52 (SDYK)) interacts with NADP(+). 135–142 (FKAATLGT) serves as a coordination point for substrate. Residues 204-207 (SPRS), Y222, and 269-270 (LE) each bind NADP(+). Residue 290-294 (SAELY) coordinates substrate. An NADP(+)-binding site is contributed by 360–361 (HP).

This sequence belongs to the zinc-containing alcohol dehydrogenase family. As to quaternary structure, monomer.

The protein operates within secondary metabolite biosynthesis. In terms of biological role, trans-enoyl reductase; part of the gene cluster that mediates the biosynthesis of wortmanamides A and B, reduced long-chain polyketides amidated with a specific omega-amino acid, 5-aminopentanoic acid (5PA). The PKS modules of TwmB are involved in the synthesis of the polyketide backbone, whereas the non-canonical C domain of TwmB is a bonafide condensation domain that specifically selects 5PA and catalyzes amidation to release polyketide chain. The C domain clearly prefers C16 and C18 fatty acyl substrates, which is consistent with simultaneous formation of both octaketide and nonaketide acyl amides wortmanamides A and B. Because TwmB lacks a designated enoylreductase (ER) domain, the required activity is provided the enoyl reductase TwmE. The roles of the remaining enzymes have still to be clarified. This Talaromyces wortmannii (Penicillium wortmannii) protein is Trans-enoyl reductase TwmE.